Here is a 493-residue protein sequence, read N- to C-terminus: Dynein regulatory complex subunit 2 (493 aa).

2 coiled-coil regions span residues 99-163 and 253-280; these read DSVI…RKLI and KDEK…ILKG.

This sequence belongs to the DRC2 family. In terms of assembly, component of the nexin-dynein regulatory complex (N-DRC). Interacts with DRC1.

It is found in the cytoplasm. It localises to the cytoskeleton. The protein localises to the flagellum basal body. The protein resides in the cell projection. Its subcellular location is the cilium. It is found in the flagellum. It localises to the flagellum axoneme. Its function is as follows. Component of the nexin-dynein regulatory complex (N-DRC), a key regulator of ciliary/flagellar motility which maintains the alignment and integrity of the distal axoneme and regulates microtubule sliding in motile axonemes. Plays a critical role in the assembly of N-DRC and also stabilizes the assembly of multiple inner dynein arms and radial spokes. Coassembles with DRC1 to form a central scaffold needed for assembly of the N-DRC and its attachment to the outer doublet microtubules. This Mus musculus (Mouse) protein is Dynein regulatory complex subunit 2 (Ccdc65).